The sequence spans 443 residues: UDP-N-acetylmuramate--L-alanine ligase (443 aa).

110–116 contacts ATP; it reads GAHGKTS.

It belongs to the MurCDEF family.

It localises to the cytoplasm. It carries out the reaction UDP-N-acetyl-alpha-D-muramate + L-alanine + ATP = UDP-N-acetyl-alpha-D-muramoyl-L-alanine + ADP + phosphate + H(+). It participates in cell wall biogenesis; peptidoglycan biosynthesis. In terms of biological role, cell wall formation. This Lactococcus lactis subsp. cremoris (strain SK11) protein is UDP-N-acetylmuramate--L-alanine ligase.